We begin with the raw amino-acid sequence, 420 residues long: Histidine--tRNA ligase (420 aa).

This sequence belongs to the class-II aminoacyl-tRNA synthetase family. In terms of assembly, homodimer.

The protein localises to the cytoplasm. It carries out the reaction tRNA(His) + L-histidine + ATP = L-histidyl-tRNA(His) + AMP + diphosphate + H(+). The polypeptide is Histidine--tRNA ligase (Desulforudis audaxviator (strain MP104C)).